A 265-amino-acid chain; its full sequence is uncharacterized protein (265 aa).

The first 22 residues, 1–22 (MGYFKRVLLYIIVMVLSVFIIG), serve as a signal peptide directing secretion. A lipid anchor (N-palmitoyl cysteine) is attached at Cys-23. Residue Cys-23 is the site of S-diacylglycerol cysteine attachment.

This sequence belongs to the staphylococcal tandem lipoprotein family.

The protein localises to the cell membrane. This is an uncharacterized protein from Staphylococcus aureus (strain MSSA476).